The sequence spans 227 residues: Thymidylate kinase (227 aa).

Residue 16–23 (GIDGAGKT) coordinates ATP.

It belongs to the thymidylate kinase family.

It catalyses the reaction dTMP + ATP = dTDP + ADP. In terms of biological role, phosphorylation of dTMP to form dTDP in both de novo and salvage pathways of dTTP synthesis. The protein is Thymidylate kinase of Xanthomonas oryzae pv. oryzae (strain MAFF 311018).